We begin with the raw amino-acid sequence, 327 residues long: Embigin (327 aa).

The N-terminal stretch at 1–32 (MRALPGLLEARARTPRLLLLQCLLAAARPSSA) is a signal peptide. Residues 33 to 260 (DGSAPDSPFT…ELVVLSYLVP (228 aa)) are Extracellular-facing. 9 N-linked (GlcNAc...) asparagine glycosylation sites follow: Asn-54, Asn-61, Asn-75, Asn-85, Asn-100, Asn-189, Asn-196, Asn-213, and Asn-218. Ig-like V-type domains lie at 71–158 (PVEK…NFKV) and 159–253 (PELH…IELV). 2 cysteine pairs are disulfide-bonded: Cys-88–Cys-142 and Cys-180–Cys-237. The helical transmembrane segment at 261 to 281 (LKPFLVIVAEVILLVATILLC) threads the bilayer. The Cytoplasmic segment spans residues 282-327 (EKYTQKKKKHSDEGKEFEQIEQLKSDDSNGIENNVPRHRKNESLGQ). The interval 287 to 327 (KKKKHSDEGKEFEQIEQLKSDDSNGIENNVPRHRKNESLGQ) is disordered. Basic and acidic residues predominate over residues 291-308 (HSDEGKEFEQIEQLKSDD). Position 309 is a phosphoserine (Ser-309).

In terms of assembly, interacts with SLC16A1, SLC16A6 and SLC16A7.

Its subcellular location is the cell membrane. It is found in the synapse. Plays a role in the outgrowth of motoneurons and in the formation of neuromuscular junctions. Following muscle denervation, promotes nerve terminal sprouting and the formation of additional acetylcholine receptor clusters at synaptic sites without affecting terminal Schwann cell number or morphology. Delays the retraction of terminal sprouts following re-innervation of denervated endplates. May play a role in targeting the monocarboxylate transporters SLC16A1, SLC16A6 and SLC16A7 to the cell membrane. This is Embigin (EMB) from Homo sapiens (Human).